The sequence spans 354 residues: Adenine deaminase (354 aa).

Residues H19, H21, and H211 each contribute to the Zn(2+) site. E214 functions as the Proton donor in the catalytic mechanism. D291 provides a ligand contact to Zn(2+). D292 provides a ligand contact to substrate.

It belongs to the metallo-dependent hydrolases superfamily. Adenosine and AMP deaminases family. Adenine deaminase type 2 subfamily. Zn(2+) serves as cofactor.

It is found in the cytoplasm. The protein localises to the nucleus. The enzyme catalyses adenine + H2O + H(+) = hypoxanthine + NH4(+). Catalyzes the hydrolytic deamination of adenine to hypoxanthine. Plays an important role in the purine salvage pathway and in nitrogen catabolism. This Aspergillus fumigatus (strain ATCC MYA-4609 / CBS 101355 / FGSC A1100 / Af293) (Neosartorya fumigata) protein is Adenine deaminase (aah1).